A 435-amino-acid chain; its full sequence is AMSH-like protease sst2 (435 aa).

The segment covering 162–181 has biased composition (low complexity); it reads TDLLSPDSQKLSKSSSDLPQ. The disordered stretch occupies residues 162 to 185; it reads TDLLSPDSQKLSKSSSDLPQFDYP. Phosphothreonine is present on Thr-192. Residues 262 to 392 form the MPN domain; sequence TIYLPKLLKK…FRLLDPEGLQ (131 aa). His-341, His-343, Asp-354, His-356, Cys-397, His-404, and His-406 together coordinate Zn(2+). Positions 341–354 match the JAMM motif motif; that stretch reads HTHPTQTCFMSSVD.

It belongs to the peptidase M67C family. Requires Zn(2+) as cofactor.

It localises to the cytoplasm. The protein localises to the endosome. Zinc metalloprotease that specifically cleaves 'Lys-63'-linked polyubiquitin chains. Does not cleave 'Lys-48'-linked polyubiquitin chains. Plays a role in the multivesicular body (MVB) sorting pathway. Required for ubiquitin-dependent sorting of proteins into the endosome and subsequent trafficking to the vacuole. May regulate MVB sorting through deubiquitination of ubiquitinated ESCRT proteins. This is AMSH-like protease sst2 (sst2) from Schizosaccharomyces pombe (strain 972 / ATCC 24843) (Fission yeast).